The sequence spans 190 residues: GMP synthase [glutamine-hydrolyzing] subunit A (190 aa).

Positions 2–189 (TILVINNKGQ…YEICKKRCNN (188 aa)) constitute a Glutamine amidotransferase type-1 domain. The Nucleophile role is filled by C76. Catalysis depends on residues H163 and E165.

Heterodimer composed of a glutamine amidotransferase subunit (A) and a GMP-binding subunit (B).

The enzyme catalyses XMP + L-glutamine + ATP + H2O = GMP + L-glutamate + AMP + diphosphate + 2 H(+). The protein operates within purine metabolism; GMP biosynthesis; GMP from XMP (L-Gln route): step 1/1. In terms of biological role, catalyzes the synthesis of GMP from XMP. This chain is GMP synthase [glutamine-hydrolyzing] subunit A, found in Methanobrevibacter smithii (strain ATCC 35061 / DSM 861 / OCM 144 / PS).